The sequence spans 406 residues: Imidazolonepropionase (406 aa).

The Fe(3+) site is built by His-72 and His-74. 2 residues coordinate Zn(2+): His-72 and His-74. Arg-81, Tyr-144, and His-177 together coordinate 4-imidazolone-5-propanoate. Residue Tyr-144 coordinates N-formimidoyl-L-glutamate. His-242 lines the Fe(3+) pocket. His-242 is a Zn(2+) binding site. 4-imidazolone-5-propanoate is bound at residue Gln-245. Asp-317 provides a ligand contact to Fe(3+). Zn(2+) is bound at residue Asp-317. Asn-319 and Gly-321 together coordinate N-formimidoyl-L-glutamate. 4-imidazolone-5-propanoate is bound at residue Thr-322.

This sequence belongs to the metallo-dependent hydrolases superfamily. HutI family. Zn(2+) is required as a cofactor. It depends on Fe(3+) as a cofactor.

The protein resides in the cytoplasm. It catalyses the reaction 4-imidazolone-5-propanoate + H2O = N-formimidoyl-L-glutamate. It functions in the pathway amino-acid degradation; L-histidine degradation into L-glutamate; N-formimidoyl-L-glutamate from L-histidine: step 3/3. In terms of biological role, catalyzes the hydrolytic cleavage of the carbon-nitrogen bond in imidazolone-5-propanoate to yield N-formimidoyl-L-glutamate. It is the third step in the universal histidine degradation pathway. The protein is Imidazolonepropionase of Yersinia enterocolitica serotype O:8 / biotype 1B (strain NCTC 13174 / 8081).